We begin with the raw amino-acid sequence, 514 residues long: uncharacterized protein (514 aa).

It to E.coli YjjI.

This is an uncharacterized protein from Haemophilus influenzae (strain ATCC 51907 / DSM 11121 / KW20 / Rd).